The chain runs to 266 residues: Ribosomal RNA small subunit methyltransferase A (266 aa).

Positions 16, 18, 43, 64, 89, and 110 each coordinate S-adenosyl-L-methionine.

It belongs to the class I-like SAM-binding methyltransferase superfamily. rRNA adenine N(6)-methyltransferase family. RsmA subfamily.

It localises to the cytoplasm. It catalyses the reaction adenosine(1518)/adenosine(1519) in 16S rRNA + 4 S-adenosyl-L-methionine = N(6)-dimethyladenosine(1518)/N(6)-dimethyladenosine(1519) in 16S rRNA + 4 S-adenosyl-L-homocysteine + 4 H(+). Its function is as follows. Specifically dimethylates two adjacent adenosines (A1518 and A1519) in the loop of a conserved hairpin near the 3'-end of 16S rRNA in the 30S particle. May play a critical role in biogenesis of 30S subunits. This is Ribosomal RNA small subunit methyltransferase A from Marinomonas sp. (strain MWYL1).